A 149-amino-acid polypeptide reads, in one-letter code: D-aminoacyl-tRNA deacylase (149 aa).

Positions 137 to 138 (GP) match the Gly-cisPro motif, important for rejection of L-amino acids motif.

This sequence belongs to the DTD family. Homodimer.

The protein resides in the cytoplasm. It catalyses the reaction glycyl-tRNA(Ala) + H2O = tRNA(Ala) + glycine + H(+). The enzyme catalyses a D-aminoacyl-tRNA + H2O = a tRNA + a D-alpha-amino acid + H(+). In terms of biological role, an aminoacyl-tRNA editing enzyme that deacylates mischarged D-aminoacyl-tRNAs. Also deacylates mischarged glycyl-tRNA(Ala), protecting cells against glycine mischarging by AlaRS. Acts via tRNA-based rather than protein-based catalysis; rejects L-amino acids rather than detecting D-amino acids in the active site. By recycling D-aminoacyl-tRNA to D-amino acids and free tRNA molecules, this enzyme counteracts the toxicity associated with the formation of D-aminoacyl-tRNA entities in vivo and helps enforce protein L-homochirality. The polypeptide is D-aminoacyl-tRNA deacylase (Syntrophobacter fumaroxidans (strain DSM 10017 / MPOB)).